The primary structure comprises 333 residues: MLLLPLLLLAVIVPGGDNEDVFQGPTSFHVIQISTFANSTWAQNQGSGWLDNLQLYGWDSDPGTTIFLKPWSKGNFSDEEVTELEELFRVYLIGFTLEVQDHVSEFQLEYPFVIQDIAGCELHPGKAVESFLKGAFGGLDFVSIKNDSCAPVPEGGSMAQRFYELIIQYHAICDTIAKLLLETCPRYFLSVLDAGKAELQRQVKPEAWLSSGPTPGPGRLLLVCHVSGFYPKPVWVMWMRGEQEEPGTQQGDIMPNANWTWHLRATLDVAAGEAAGLSCRVKHSSLGDQDIVLYWGHPTSTGLIFVAIIVSSLILLICLALWFWRRWSYLTIL.

The signal sequence occupies residues 1–18 (MLLLPLLLLAVIVPGGDN). The Extracellular segment spans residues 19–302 (EDVFQGPTSF…LYWGHPTSTG (284 aa)). N-linked (GlcNAc...) asparagine glycans are attached at residues Asn-38, Asn-75, Asn-146, and Asn-258. 2 disulfide bridges follow: Cys-120–Cys-184 and Cys-224–Cys-279. Residues 185–295 (PRYFLSVLDA…LGDQDIVLYW (111 aa)) form the Ig-like domain. The helical transmembrane segment at 303–323 (LIFVAIIVSSLILLICLALWF) threads the bilayer. The Cytoplasmic portion of the chain corresponds to 324–333 (WRRWSYLTIL). Positions 329-332 (YLTI) match the Internalization signal motif.

Heterodimer with B2M (beta-2-microglobulin). Interacts with saposin C.

Its subcellular location is the cell membrane. It localises to the endosome membrane. The protein localises to the lysosome membrane. Functionally, antigen-presenting protein that binds self and non-self lipid and glycolipid antigens and presents them to T-cell receptors on natural killer T-cells. In Ovis aries (Sheep), this protein is T-cell surface glycoprotein CD1b-1.